Consider the following 466-residue polypeptide: MSLSLWQQCLARLQDELPATEFSMWIRPLQAELSDNTLALYAPNRFVLDWVRDKYLNNINGLLNTFCGADAPQLRFEVGTKPVTQTLKTPVHNVVAPTQTTTAQPQRVAPAARSGWDNVPAPAEPTYRSNVNVKHTFDNFVEGKSNQLARAAARQVADNPGGAYNPLFLYGGTGLGKTHLLHAVGNGIMARKPNAKVVYMHSERFVQDMVKALQNNAIEEFKRYYRSVDALLIDDIQFFANKERSQEEFFHTFNALLEGNQQIILTSDRYPKEINGVEDRLKSRFGWGLTVAIEPPELETRVAILMKKADENDIRLPGEVAFFIAKRLRSNVRELEGALNRVIANANFTGRAITIDFVREALRDLLALQEKLVTIDNIQKTVAEYYKIKIADLLSKRRSRSVARPRQMAMALAKELTNYSLPEIGDAFGGRDHTTVLHACRKIEQLREESHDIKEDFSNLIRTLSS.

The interval 1 to 86 (MSLSLWQQCL…EVGTKPVTQT (86 aa)) is domain I, interacts with DnaA modulators. Positions 86-129 (TLKTPVHNVVAPTQTTTAQPQRVAPAARSGWDNVPAPAEPTYRS) are domain II. Positions 130–346 (NVNVKHTFDN…GALNRVIANA (217 aa)) are domain III, AAA+ region. Residues glycine 174, glycine 176, lysine 177, and threonine 178 each contribute to the ATP site. Positions 347–466 (NFTGRAITID…FSNLIRTLSS (120 aa)) are domain IV, binds dsDNA.

Belongs to the DnaA family. Oligomerizes as a right-handed, spiral filament on DNA at oriC.

Its subcellular location is the cytoplasm. Plays an essential role in the initiation and regulation of chromosomal replication. ATP-DnaA binds to the origin of replication (oriC) to initiate formation of the DNA replication initiation complex once per cell cycle. Binds the DnaA box (a 9 base pair repeat at the origin) and separates the double-stranded (ds)DNA. Forms a right-handed helical filament on oriC DNA; dsDNA binds to the exterior of the filament while single-stranded (ss)DNA is stabiized in the filament's interior. The ATP-DnaA-oriC complex binds and stabilizes one strand of the AT-rich DNA unwinding element (DUE), permitting loading of DNA polymerase. After initiation quickly degrades to an ADP-DnaA complex that is not apt for DNA replication. Binds acidic phospholipids. In Salmonella choleraesuis (strain SC-B67), this protein is Chromosomal replication initiator protein DnaA.